The sequence spans 676 residues: MNFDAVADQQMTDRRYFALEVAESDDADSSLNSSSMGSPAVDVGRKVYKITSHKGSAEDESQSFFTSSDSPTSKTRPVGKTIENDDYYGKRSSTGSSLKQLFNKININDTAHSSNKENVSQSVLSENKLLSPSKRLSKQGLTKVTNSKFRTPLRPISNQSTLSRDEPVKDFRSLKFRSGSDFKCWGDEKTSSHVHSSSVNSVNSFTSTTSSSKWKFWKNDNLLSRSLSSRSVNDQDPNFVQPKPTNSLQKKSSISSFHNSIFGGGKHTEKKRNSGFIMPDHQSTKELNHKHSSSNLSFRSLKHKTSHSSLNKLKVRRKGNTQELNHPIKKTCQISLPVPDQVSKDKIQLKLKNSTSLASLSSEVTPINTLDYNDSILQQILQLCDVKYILHDLREAQSLGLFTLNTRSVQLSHNFWQTYHSDMQTSLICKKVCLGALSDLTTSNLISLHELKSLRLIQGTSGVANLLQAYVVPSNQCENDQNLILYLFFKYQGTPLSRCSNIDYSQALSIFWQCSSILYVAESKFQLEHRNLTLDHILIDSKGNVTLIDMKCCRFLNIDNNKASYTRLDHHYFFQGRGTLQFEIYELMRSMLPQPISWATFEPRTNLLWLYHLSSSLLKMAKKAVVSGALNREENILIELTHLLDPARKHSKTIFKKELVIRTCGDLLSLKGEIMQ.

The disordered stretch occupies residues 53–93 (HKGSAEDESQSFFTSSDSPTSKTRPVGKTIENDDYYGKRSS). Over residues 62–75 (QSFFTSSDSPTSKT) the composition is skewed to polar residues. Positions 116–118 (KEN) match the KEN box motif. A D box motif is present at residues 150-158 (RTPLRPISN). The interval 228 to 312 (SSRSVNDQDP…HKTSHSSLNK (85 aa)) is disordered. The segment covering 232–259 (VNDQDPNFVQPKPTNSLQKKSSISSFHN) has biased composition (polar residues). In terms of domain architecture, Protein kinase spans 383-672 (LCDVKYILHD…TCGDLLSLKG (290 aa)). ATP contacts are provided by residues 389-397 (ILHDLREAQ) and K430.

It belongs to the protein kinase superfamily. Ser/Thr protein kinase family. Haspin subfamily. Post-translationally, periodically phosphorylated during the cell cycle with a phosphorylation peak during mitosis and hyperphosphorylated after DNA damage.

It carries out the reaction L-seryl-[protein] + ATP = O-phospho-L-seryl-[protein] + ADP + H(+). The enzyme catalyses L-threonyl-[protein] + ATP = O-phospho-L-threonyl-[protein] + ADP + H(+). Functionally, serine/threonine haspin-like protein kinase involved in cell cycle regulation. The chain is Serine/threonine-protein kinase Haspin homolog ALK2 (ALK2) from Saccharomyces cerevisiae (strain ATCC 204508 / S288c) (Baker's yeast).